Reading from the N-terminus, the 149-residue chain is NADH-ubiquinone oxidoreductase chain 6 (149 aa).

Transmembrane regions (helical) follow at residues 23 to 43 (ILML…FYFI), 51 to 71 (MMMI…MISL), 83 to 103 (LSVT…MTKL), and 114 to 134 (VNFV…LTII).

This sequence belongs to the complex I subunit 6 family.

The protein resides in the mitochondrion membrane. The catalysed reaction is a ubiquinone + NADH + 5 H(+)(in) = a ubiquinol + NAD(+) + 4 H(+)(out). Core subunit of the mitochondrial membrane respiratory chain NADH dehydrogenase (Complex I) that is believed to belong to the minimal assembly required for catalysis. Complex I functions in the transfer of electrons from NADH to the respiratory chain. The immediate electron acceptor for the enzyme is believed to be ubiquinone. The chain is NADH-ubiquinone oxidoreductase chain 6 (ND6) from Rhipicephalus sanguineus (Brown dog tick).